The sequence spans 501 residues: DELTA-alicitoxin-Pse2a (501 aa).

Residues 1–22 form the signal peptide; that stretch reads MSPYFKLSSALIFLAITMEALC. A propeptide spanning residues 23-35 is cleaved from the precursor; sequence SPIENTSTSNKDN. In terms of domain architecture, MACPF spans 23–359; sequence SPIENTSTSN…GFLHFGCSYL (337 aa). Residues 135-159 adopt a coiled-coil conformation; the sequence is AAVTNNIASSEEEVQGLSLNLKAYS. The EGF-like domain occupies 388 to 422; it reads VCKVGPEGCQHHEDCHYRAAFWCECGGPYDLARTC. 3 disulfide bridges follow: cysteine 389–cysteine 402, cysteine 396–cysteine 410, and cysteine 412–cysteine 422.

It is found in the secreted. It localises to the nematocyst. Causes lethal toxicity to the shrimp Palaemon paucidence, and hemolytic activity toward sheep red blood cells. This chain is DELTA-alicitoxin-Pse2a, found in Phyllodiscus semoni (Night anemone).